A 354-amino-acid chain; its full sequence is Glycerol-3-phosphate dehydrogenase [NAD(P)+] (354 aa).

NADPH is bound by residues Ser27, Phe28, Arg48, and Lys121. Residues Lys121 and Gly149 each contribute to the sn-glycerol 3-phosphate site. Ala153 provides a ligand contact to NADPH. Positions 204, 257, 267, 268, and 269 each coordinate sn-glycerol 3-phosphate. Lys204 functions as the Proton acceptor in the catalytic mechanism. Arg268 serves as a coordination point for NADPH. 2 residues coordinate NADPH: Val292 and Glu294.

It belongs to the NAD-dependent glycerol-3-phosphate dehydrogenase family.

The protein resides in the cytoplasm. It catalyses the reaction sn-glycerol 3-phosphate + NAD(+) = dihydroxyacetone phosphate + NADH + H(+). It carries out the reaction sn-glycerol 3-phosphate + NADP(+) = dihydroxyacetone phosphate + NADPH + H(+). It functions in the pathway membrane lipid metabolism; glycerophospholipid metabolism. Functionally, catalyzes the reduction of the glycolytic intermediate dihydroxyacetone phosphate (DHAP) to sn-glycerol 3-phosphate (G3P), the key precursor for phospholipid synthesis. In Pseudomonas fluorescens (strain Pf0-1), this protein is Glycerol-3-phosphate dehydrogenase [NAD(P)+].